The sequence spans 236 residues: Eukaryotic translation initiation factor 3 subunit J (236 aa).

The interval 1 to 84 (MADDWESAAD…RLEEEAEAQR (84 aa)) is disordered. Positions 28–46 (GEDEDEDIKDSWEDEEEKK) are enriched in acidic residues. Composition is skewed to basic and acidic residues over residues 47-58 (DEEKPTKTEAPA) and 68-77 (AKLEQQARLE).

The protein belongs to the eIF-3 subunit J family. Component of the eukaryotic translation initiation factor 3 (eIF-3) complex. The eIF-3 complex interacts with pix.

Its subcellular location is the cytoplasm. Component of the eukaryotic translation initiation factor 3 (eIF-3) complex, which is involved in protein synthesis of a specialized repertoire of mRNAs and, together with other initiation factors, stimulates binding of mRNA and methionyl-tRNAi to the 40S ribosome. The eIF-3 complex specifically targets and initiates translation of a subset of mRNAs involved in cell proliferation. The protein is Eukaryotic translation initiation factor 3 subunit J of Drosophila yakuba (Fruit fly).